Here is a 320-residue protein sequence, read N- to C-terminus: MENTRDSAAISETKYIKASNRVTIYDFIKLAKPGIIISNSIAAFGGFWIAFASAEKTLTGLAFLMTMVTAMLGTAFVMASGTVYNNYFDRHMDAKMARTRSRASVTGKMPPAMILTYGSVLGIAGLAMLYSLNPLTAFLGLAAFIFYAIIYTVWVKRTSVWSTFVGSFPGAAPPLMGYCAVTGDFSMTAVLLYTIMFLWQPPHFWAIGIRRKEEYRAAGVPLLPVVKGNHVTKIKMMQYIAVLVPVTLLFPFSLGTGHISPFYFLAALVLGGIWIKKSIKGFKTDDDVKWAKDMFVYSLIYFCLLFFIMMIDSFMMFLIR.

Transmembrane regions (helical) follow at residues 34–54 (GIIISNSIAAFGGFWIAFASA), 58–78 (LTGLAFLMTMVTAMLGTAFVM), 112–132 (AMILTYGSVLGIAGLAMLYSL), 135–155 (LTAFLGLAAFIFYAIIYTVWV), 160–180 (VWSTFVGSFPGAAPPLMGYCA), 189–209 (AVLLYTIMFLWQPPHFWAIGI), 234–254 (IKMMQYIAVLVPVTLLFPFSL), 255–275 (GTGHISPFYFLAALVLGGIWI), and 299–319 (LIYFCLLFFIMMIDSFMMFLI).

Belongs to the UbiA prenyltransferase family. Protoheme IX farnesyltransferase subfamily. In terms of assembly, interacts with CtaA.

The protein resides in the cell membrane. It catalyses the reaction heme b + (2E,6E)-farnesyl diphosphate + H2O = Fe(II)-heme o + diphosphate. It participates in porphyrin-containing compound metabolism; heme O biosynthesis; heme O from protoheme: step 1/1. Converts heme B (protoheme IX) to heme O by substitution of the vinyl group on carbon 2 of heme B porphyrin ring with a hydroxyethyl farnesyl side group. In Bacillus subtilis (strain 168), this protein is Protoheme IX farnesyltransferase 1 (ctaB1).